The chain runs to 222 residues: Probable GTP-binding protein EngB (222 aa).

Residues 23–217 (NASEIVFLGR…REEIVKYTLG (195 aa)) enclose the EngB-type G domain. Residues 31–38 (GRSNVGKS), 57–61 (GKTQL), 82–85 (DLPG), 152–155 (TKAD), and 191–193 (FSA) each bind GTP. The Mg(2+) site is built by serine 38 and threonine 59.

Belongs to the TRAFAC class TrmE-Era-EngA-EngB-Septin-like GTPase superfamily. EngB GTPase family. The cofactor is Mg(2+).

Necessary for normal cell division and for the maintenance of normal septation. The polypeptide is Probable GTP-binding protein EngB (Helicobacter hepaticus (strain ATCC 51449 / 3B1)).